Here is a 228-residue protein sequence, read N- to C-terminus: UPF0173 metal-dependent hydrolase LMOf2365_1599 (228 aa).

This sequence belongs to the UPF0173 family.

In Listeria monocytogenes serotype 4b (strain F2365), this protein is UPF0173 metal-dependent hydrolase LMOf2365_1599.